The chain runs to 173 residues: uncharacterized protein (173 aa).

Helical transmembrane passes span 9–29, 32–52, 100–120, and 127–147; these read FSICICQIFIIYFIFFLLLCV, ICSALSNGFNFLIIYGGTFFH, MFLCFFSSIVFASAFVFSFIV, and FLFLSLNSGFSFTGYITGLYP.

The protein resides in the membrane. This is an uncharacterized protein from Saccharomyces cerevisiae (strain ATCC 204508 / S288c) (Baker's yeast).